Reading from the N-terminus, the 435-residue chain is 3-phosphoshikimate 1-carboxyvinyltransferase (435 aa).

3 residues coordinate 3-phosphoshikimate: lysine 21, serine 22, and arginine 26. Residue lysine 21 participates in phosphoenolpyruvate binding. Phosphoenolpyruvate is bound by residues glycine 100 and arginine 128. 3-phosphoshikimate contacts are provided by serine 171, serine 172, glutamine 173, serine 199, aspartate 313, and lysine 340. Glutamine 173 lines the phosphoenolpyruvate pocket. Aspartate 313 functions as the Proton acceptor in the catalytic mechanism. Arginine 344, arginine 386, and lysine 412 together coordinate phosphoenolpyruvate.

This sequence belongs to the EPSP synthase family. Monomer.

It localises to the cytoplasm. The catalysed reaction is 3-phosphoshikimate + phosphoenolpyruvate = 5-O-(1-carboxyvinyl)-3-phosphoshikimate + phosphate. It participates in metabolic intermediate biosynthesis; chorismate biosynthesis; chorismate from D-erythrose 4-phosphate and phosphoenolpyruvate: step 6/7. Catalyzes the transfer of the enolpyruvyl moiety of phosphoenolpyruvate (PEP) to the 5-hydroxyl of shikimate-3-phosphate (S3P) to produce enolpyruvyl shikimate-3-phosphate and inorganic phosphate. This is 3-phosphoshikimate 1-carboxyvinyltransferase from Clostridium novyi (strain NT).